Here is a 491-residue protein sequence, read N- to C-terminus: Bifunctional protein GlmU (491 aa).

The interval Met1–Arg238 is pyrophosphorylase. UDP-N-acetyl-alpha-D-glucosamine contacts are provided by residues Leu14–Gly17, Lys28, Gln81, Gly86–Thr87, Tyr110–Asp112, Gly149, Glu163, Asn178, and Asn236. Asp112 contributes to the Mg(2+) binding site. A Mg(2+)-binding site is contributed by Asn236. The linker stretch occupies residues Ala239–Ala259. Positions Gly260–Pro491 are N-acetyltransferase. The UDP-N-acetyl-alpha-D-glucosamine site is built by Arg341 and Lys359. Catalysis depends on His371, which acts as the Proton acceptor. Residues Tyr374 and Asn385 each contribute to the UDP-N-acetyl-alpha-D-glucosamine site. Residues Ala388, Asn394–Tyr395, Ser413, and Ala431 contribute to the acetyl-CoA site. Positions Ala460–Pro491 are disordered.

In the N-terminal section; belongs to the N-acetylglucosamine-1-phosphate uridyltransferase family. It in the C-terminal section; belongs to the transferase hexapeptide repeat family. As to quaternary structure, homotrimer. Requires Mg(2+) as cofactor.

Its subcellular location is the cytoplasm. The catalysed reaction is alpha-D-glucosamine 1-phosphate + acetyl-CoA = N-acetyl-alpha-D-glucosamine 1-phosphate + CoA + H(+). It catalyses the reaction N-acetyl-alpha-D-glucosamine 1-phosphate + UTP + H(+) = UDP-N-acetyl-alpha-D-glucosamine + diphosphate. It participates in nucleotide-sugar biosynthesis; UDP-N-acetyl-alpha-D-glucosamine biosynthesis; N-acetyl-alpha-D-glucosamine 1-phosphate from alpha-D-glucosamine 6-phosphate (route II): step 2/2. It functions in the pathway nucleotide-sugar biosynthesis; UDP-N-acetyl-alpha-D-glucosamine biosynthesis; UDP-N-acetyl-alpha-D-glucosamine from N-acetyl-alpha-D-glucosamine 1-phosphate: step 1/1. Its pathway is bacterial outer membrane biogenesis; LPS lipid A biosynthesis. Its function is as follows. Catalyzes the last two sequential reactions in the de novo biosynthetic pathway for UDP-N-acetylglucosamine (UDP-GlcNAc). The C-terminal domain catalyzes the transfer of acetyl group from acetyl coenzyme A to glucosamine-1-phosphate (GlcN-1-P) to produce N-acetylglucosamine-1-phosphate (GlcNAc-1-P), which is converted into UDP-GlcNAc by the transfer of uridine 5-monophosphate (from uridine 5-triphosphate), a reaction catalyzed by the N-terminal domain. The sequence is that of Bifunctional protein GlmU from Kineococcus radiotolerans (strain ATCC BAA-149 / DSM 14245 / SRS30216).